A 566-amino-acid polypeptide reads, in one-letter code: DNA ligase B (566 aa).

The active-site N6-AMP-lysine intermediate is lysine 125.

Belongs to the NAD-dependent DNA ligase family. LigB subfamily.

The catalysed reaction is NAD(+) + (deoxyribonucleotide)n-3'-hydroxyl + 5'-phospho-(deoxyribonucleotide)m = (deoxyribonucleotide)n+m + AMP + beta-nicotinamide D-nucleotide.. Catalyzes the formation of phosphodiester linkages between 5'-phosphoryl and 3'-hydroxyl groups in double-stranded DNA using NAD as a coenzyme and as the energy source for the reaction. The sequence is that of DNA ligase B from Pseudomonas putida (strain ATCC 700007 / DSM 6899 / JCM 31910 / BCRC 17059 / LMG 24140 / F1).